The following is a 403-amino-acid chain: Alkaline protease 1 (403 aa).

Residues 1–21 form the signal peptide; the sequence is MLSIKRTLLLLGAVLPAVFGA. Positions 22–125 are excised as a propeptide; the sequence is PVQETRRAAQ…QIWYLDALTT (104 aa). The Inhibitor I9 domain maps to 36 to 120; sequence KYIVTFKPGT…HVEEDQIWYL (85 aa). Residues 130–403 form the Peptidase S8 domain; it reads PWGLGSISHK…PNKLAYNGNA (274 aa). Catalysis depends on charge relay system residues Asp-162 and His-193. Residues Asn-253 and Asn-307 are each glycosylated (N-linked (GlcNAc...) asparagine). Catalysis depends on Ser-349, which acts as the Charge relay system. Residue Asn-367 is glycosylated (N-linked (GlcNAc...) asparagine).

The protein belongs to the peptidase S8 family.

The protein localises to the secreted. It carries out the reaction Hydrolysis of proteins with broad specificity, and of Bz-Arg-OEt &gt; Ac-Tyr-OEt. Does not hydrolyze peptide amides.. In terms of biological role, secreted alkaline protease that allows assimilation of proteinaceous substrates. Acts as a significant virulence factor in invasive aspergillosis. Involved in immune evasion from the human and mice complement systems during infection. Efficiently cleaves important components of the complement cascade such as such as C3, C4, C5, and C1q, as well as IgG, which leads to down-regulation of complement activation at the hyphal surface. In Aspergillus fumigatus (strain CBS 144.89 / FGSC A1163 / CEA10) (Neosartorya fumigata), this protein is Alkaline protease 1 (alp1).